Reading from the N-terminus, the 397-residue chain is Mannonate dehydratase (397 aa).

The protein belongs to the mannonate dehydratase family. Requires Fe(2+) as cofactor. Mn(2+) is required as a cofactor.

The enzyme catalyses D-mannonate = 2-dehydro-3-deoxy-D-gluconate + H2O. It functions in the pathway carbohydrate metabolism; pentose and glucuronate interconversion. Functionally, catalyzes the dehydration of D-mannonate. The polypeptide is Mannonate dehydratase (Saccharophagus degradans (strain 2-40 / ATCC 43961 / DSM 17024)).